Consider the following 739-residue polypeptide: Catalase-peroxidase (739 aa).

The disordered stretch occupies residues 1–33 (MSVEHPPIGEANTEPAAGGCPVTGRLRHPLQGG). The segment at residues 106–229 (WHSAGTYRSS…LAAVQMGLIY (124 aa)) is a cross-link (tryptophyl-tyrosyl-methioninium (Trp-Tyr) (with M-255)). His107 acts as the Proton acceptor in catalysis. The tract at residues 113 to 134 (RSSDGRGGANTGQQRFAPLNSW) is disordered. The tryptophyl-tyrosyl-methioninium (Tyr-Met) (with W-106) cross-link spans 229–255 (YVNPEGPNGNPDPLAAAVDIKDTFGRM). Position 270 (His270) interacts with heme b.

This sequence belongs to the peroxidase family. Peroxidase/catalase subfamily. As to quaternary structure, homodimer or homotetramer. Heme b is required as a cofactor. In terms of processing, formation of the three residue Trp-Tyr-Met cross-link is important for the catalase, but not the peroxidase activity of the enzyme.

It catalyses the reaction H2O2 + AH2 = A + 2 H2O. It carries out the reaction 2 H2O2 = O2 + 2 H2O. Bifunctional enzyme with both catalase and broad-spectrum peroxidase activity. This Nocardia farcinica (strain IFM 10152) protein is Catalase-peroxidase.